The primary structure comprises 900 residues: Chromodomain-helicase-DNA-binding protein 1-like (900 aa).

In terms of domain architecture, Helicase ATP-binding spans 52 to 217 (VQCFHCQNGC…YSLLCVVEPD (166 aa)). An ATP-binding site is contributed by 65-72 (DEMGLGKT). The DEAH box signature appears at 168–171 (DEAH). In terms of domain architecture, Helicase C-terminal spans 345-507 (LLDRLLAFLY…QKPSAEADFQ (163 aa)). S534 is modified (phosphoserine). The interval 546-569 (PDALPAAAAAGGGSLEPEEGSELE) is disordered. Residues 606-640 (TLLEKTSHGGRTLRNKGSVLIPGLAEGPIKRKKIL) are regulatory linker segment (RLS). Phosphoserine occurs at positions 612, 623, and 641. The segment at 620-678 (NKGSVLIPGLAEGPIKRKKILSPEELEDRRKKRQEAAAKRKRLMEEKRKEKEEAEHRKK) is required for ATPase activity. The tract at residues 641-673 (SPEELEDRRKKRQEAAAKRKRLMEEKRKEKEEA) is disordered. Positions 643 to 680 (EELEDRRKKRQEAAAKRKRLMEEKRKEKEEAEHRKKMA) form a coiled coil. The segment covering 653–673 (QEAAAKRKRLMEEKRKEKEEA) has biased composition (basic and acidic residues). The Macro domain occupies 709–900 (SAELAYEDLD…ASSSSAPLVP (192 aa)). A Phosphoserine modification is found at S894.

This sequence belongs to the SNF2/RAD54 helicase family. As to quaternary structure, interacts with nucleosomes; interacts with the acidic patch of histones. Interacts (via macro domain) with PARP1; interacts only when PARP1 is poly-ADP-ribosylated (PARylated). Interacts with CIAO1.

The protein localises to the nucleus. It localises to the chromosome. The catalysed reaction is ATP + H2O = ADP + phosphate + H(+). Its activity is regulated as follows. Adopts an inactive conformation in absence of DNA damage. Binding to poly-ADP-ribosylated histones activates the ATP-dependent chromatin remodeler activity. Its function is as follows. ATP-dependent chromatin remodeler that mediates chromatin-remodeling following DNA damage. Recruited to DNA damage sites through interaction with poly-ADP-ribose: specifically recognizes and binds histones that are poly-ADP-ribosylated on serine residues in response to DNA damage. Poly-ADP-ribose-binding activates the ATP-dependent chromatin remodeler activity, thereby regulating chromatin during DNA repair. Catalyzes nucleosome sliding away from DNA breaks in an ATP-dependent manner. Chromatin remodeling activity promotes PARP2 removal from chromatin. The chain is Chromodomain-helicase-DNA-binding protein 1-like (Chd1l) from Mus musculus (Mouse).